A 486-amino-acid polypeptide reads, in one-letter code: Monocarboxylate transporter 12 (486 aa).

At 1 to 9 (MTKITRVSL) the chain is on the cytoplasmic side. The next 12 helical transmembrane spans lie at 10–30 (ASPP…LVTI), 58–78 (AWIH…GSVV), 86–106 (AGIM…SFAT), 115–135 (LGVL…AMVG), 148–168 (IAMS…QLLI), 177–197 (LLIL…MRPI), 253–273 (FVVL…LFVY), 289–309 (AFLM…FGWL), 320–340 (YVCY…LPML), 353–373 (FGYF…EIVG), 383–403 (VVYF…GWLV), and 410–430 (TAAF…LGFV). At 431-486 (RIVKRMKRTQVPFPVKDSDPKLQLWTNGSVAYSVARELDQKDEEPLPKARSGCNLT) the chain is on the cytoplasmic side.

This sequence belongs to the major facilitator superfamily. Monocarboxylate porter (TC 2.A.1.13) family. Interacts with isoform 2 of BSG; this interaction is required for its localization to the plasma membrane. In terms of tissue distribution, highly expressed in the lung, liver, kidney, and pancreas. Expressed in eye lens.

The protein localises to the cell membrane. It localises to the basolateral cell membrane. It carries out the reaction creatine(in) = creatine(out). It catalyses the reaction guanidinoacetate(in) = guanidinoacetate(out). With respect to regulation, creatine uptake is inhibited by carbonyl cyanide 3-chlorophenylhydrazone (CCCP) and by valinomycin. Functions as a transporter for creatine and as well for its precursor guanidinoacetate. Transport of creatine and GAA is independent of resting membrane potential and extracellular Na(+), Cl(-), or pH. Contributes to the process of creatine biosynthesis and distribution. The polypeptide is Monocarboxylate transporter 12 (Mus musculus (Mouse)).